A 342-amino-acid chain; its full sequence is Protein BASIC PENTACYSTEINE6 (342 aa).

Residues A41–D67 are a coiled coil. Residues A41–A76 form an alanine-zipper region. Residues R143–D199 are disordered. The interval A164–K195 is required for nucleus and nucleolus localization. Over residues R185–K194 the composition is skewed to basic residues. Positions K192–K195 match the Nuclear localization signal motif.

This sequence belongs to the BBR/BPC family. Homodimer. Heterodimer with BPC4. As to expression, expressed in seedlings, leaves and pistils. Detected in the base of flowers and tips of carpels, in sepal vasculature, in young rosette, in the lateral and tip of primary roots, and in ovule at the exception of the outer integument.

It localises to the nucleus. The protein resides in the nucleolus. In terms of biological role, transcriptional regulator that specifically binds to GA-rich elements (GAGA-repeats) present in regulatory sequences of genes involved in developmental processes. This chain is Protein BASIC PENTACYSTEINE6 (BPC6), found in Arabidopsis thaliana (Mouse-ear cress).